The chain runs to 272 residues: HTH-type transcriptional repressor AllR (272 aa).

The interval 1 to 20 (MTEVRRRGRPGQAEPTAQKG) is disordered. Residues 21–83 (AQALERGIAI…SQLGWWHIGL (63 aa)) form the HTH iclR-type domain. Residues 43–62 (VSDISGSLDLPLSTTFRLLK) constitute a DNA-binding region (H-T-H motif). The IclR-ED domain occupies 98–267 (VLSVAGPFMH…AKDISTALGL (170 aa)). Glyoxylate-binding positions include 154–156 (SGA), Asp207, Cys217, and 234–236 (SIS).

Negative regulator of allantoin and glyoxylate utilization operons. Binds to the gcl promoter and to the allS-allA intergenic region. This is HTH-type transcriptional repressor AllR (allR) from Salmonella paratyphi A (strain ATCC 9150 / SARB42).